Consider the following 253-residue polypeptide: 5'-nucleotidase SurE (253 aa).

4 residues coordinate a divalent metal cation: Asp8, Asp9, Ser39, and Asn92.

The protein belongs to the SurE nucleotidase family. Requires a divalent metal cation as cofactor.

The protein localises to the cytoplasm. The catalysed reaction is a ribonucleoside 5'-phosphate + H2O = a ribonucleoside + phosphate. Its function is as follows. Nucleotidase that shows phosphatase activity on nucleoside 5'-monophosphates. The sequence is that of 5'-nucleotidase SurE from Burkholderia mallei (strain NCTC 10247).